We begin with the raw amino-acid sequence, 211 residues long: Large ribosomal subunit protein uL3 (211 aa).

Glutamine 150 bears the N5-methylglutamine mark.

It belongs to the universal ribosomal protein uL3 family. As to quaternary structure, part of the 50S ribosomal subunit. Forms a cluster with proteins L14 and L19. Post-translationally, methylated by PrmB.

Its function is as follows. One of the primary rRNA binding proteins, it binds directly near the 3'-end of the 23S rRNA, where it nucleates assembly of the 50S subunit. This Pseudomonas putida (strain GB-1) protein is Large ribosomal subunit protein uL3.